The primary structure comprises 116 residues: Nucleoid-associated protein MLBr02330 (116 aa).

A disordered region spans residues 96–116; the sequence is LTSAMRPTAPPPTPPTYMAGT.

This sequence belongs to the YbaB/EbfC family. Homodimer.

The protein localises to the cytoplasm. It localises to the nucleoid. In terms of biological role, binds to DNA and alters its conformation. May be involved in regulation of gene expression, nucleoid organization and DNA protection. This Mycobacterium leprae (strain Br4923) protein is Nucleoid-associated protein MLBr02330.